Reading from the N-terminus, the 236-residue chain is tRNA (guanine-N(1)-)-methyltransferase (236 aa).

Residues glycine 116 and 136–141 (LGDFVL) each bind S-adenosyl-L-methionine.

The protein belongs to the RNA methyltransferase TrmD family. In terms of assembly, homodimer.

It localises to the cytoplasm. It catalyses the reaction guanosine(37) in tRNA + S-adenosyl-L-methionine = N(1)-methylguanosine(37) in tRNA + S-adenosyl-L-homocysteine + H(+). Specifically methylates guanosine-37 in various tRNAs. This Thiobacillus denitrificans (strain ATCC 25259 / T1) protein is tRNA (guanine-N(1)-)-methyltransferase.